Here is a 410-residue protein sequence, read N- to C-terminus: Chitinase-3-like protein 1 (410 aa).

A signal peptide spans 1-48 (MGVKAAQTGIWASQGQSIRVVGFQAQTAHRAICLLGFVVLVLLQCCSA). Positions 49-410 (YKLVCYYTSW…NAIKDALAAT (362 aa)) constitute a GH18 domain. Cys-53 and Cys-78 are disulfide-bonded. Residue Asn-87 is glycosylated (N-linked (GlcNAc...) asparagine). Chitin-binding positions include 97–98 (EW), 124–127 (GGWN), Tyr-168, 231–234 (MTYD), and Arg-290. Cys-327 and Cys-391 are disulfide-bonded. Residues 351–365 (QWVGYDDQESVKSKV) form an important for AKT1 activation and IL8 production region. A chitin-binding site is contributed by Trp-379.

This sequence belongs to the glycosyl hydrolase 18 family. In terms of assembly, monomer.

Its subcellular location is the secreted. It is found in the extracellular space. It localises to the cytoplasm. The protein localises to the perinuclear region. The protein resides in the endoplasmic reticulum. Carbohydrate-binding lectin with a preference for chitin. Has no chitinase activity. May play a role in tissue remodeling and in the capacity of cells to respond to and cope with changes in their environment. Plays a role in T-helper cell type 2 (Th2) inflammatory response and IL-13-induced inflammation, regulating allergen sensitization, inflammatory cell apoptosis, dendritic cell accumulation and M2 macrophage differentiation. Facilitates invasion of pathogenic enteric bacteria into colonic mucosa and lymphoid organs. Mediates activation of AKT1 signaling pathway and subsequent IL8 production in colonic epithelial cells. Regulates antibacterial responses in lung by contributing to macrophage bacterial killing, controlling bacterial dissemination and augmenting host tolerance. Also regulates hyperoxia-induced injury, inflammation and epithelial apoptosis in lung. The sequence is that of Chitinase-3-like protein 1 (CHI3L1) from Pongo abelii (Sumatran orangutan).